Here is a 657-residue protein sequence, read N- to C-terminus: LIM and SH3 domain protein Lasp (657 aa).

In terms of domain architecture, LIM zinc-binding spans 3–63; sequence KTCARCQKVV…EAHIPKAKAT (61 aa). 2 Nebulin repeats span residues 64-95 and 96-130; these read AIADTPELKRIAENTKIQSNVKYHADFEKAKG and KFTQVADDPETLRIKQNTKHISNVAYHGDLEKKAA. Disordered regions lie at residues 130–151, 164–223, 235–257, 294–318, 332–415, and 460–528; these read AMEKQRGSAEVSDSSNESEYFS, PTAS…PIQH, YQQLQQQQQQQQQQRAQQQQLHD, LYPTATSQQQQMPPPQSPANPQQQA, NSHH…SAAS, and KQHA…PKRI. Over residues 140–150 the composition is skewed to polar residues; the sequence is VSDSSNESEYF. 2 stretches are compositionally biased toward low complexity: residues 172–215 and 236–254; these read AATT…QQQT and QQLQQQQQQQQQQRAQQQQ. Residues 332 to 341 are compositionally biased toward polar residues; sequence NSHHPSGNSV. Residues 342–357 show a composition bias toward low complexity; that stretch reads DQYDQPQQQQHQPQQQ. The span at 358 to 370 shows a compositional bias: polar residues; the sequence is STNPTLVAAQQQQ. Residues 371-403 show a composition bias toward low complexity; it reads SHHSLLNNNASNGGISHSHHSNINNNGHGSQNQ. Residues 460 to 475 are compositionally biased toward polar residues; the sequence is KQHASNGHMPNQQQQH. Phosphoserine is present on residues S505 and S530. A disordered region spans residues 548 to 592; it reads EQAHQQQKHQQYYQQVQMMQQQEHPPQQQQMRQQPSYSSLQEKQS. A compositionally biased stretch (low complexity) spans 549 to 586; the sequence is QAHQQQKHQQYYQQVQMMQQQEHPPQQQQMRQQPSYSS. Positions 596 to 657 constitute an SH3 domain; it reads TAMRVYRAIY…PANYVEQAVI (62 aa).

As to quaternary structure, interacts with osk.

The chain is LIM and SH3 domain protein Lasp from Drosophila melanogaster (Fruit fly).